The primary structure comprises 2606 residues: Large tegument protein deneddylase (2606 aa).

The deubiquitination activity stretch occupies residues 1–235 (MAFQAQTDTG…LKRSGAYVNL (235 aa)). The 212-residue stretch at 14–225 (LATASSHQGD…LLANYGIASA (212 aa)) folds into the Peptidase C76 domain. Catalysis depends on residues cysteine 34, aspartate 163, and histidine 165. Disordered regions lie at residues 318–349 (IAIS…PNEA), 390–411 (DTDS…KSGQ), 1020–1135 (KKGL…ESSE), 2253–2316 (PEIH…PTPL), and 2434–2458 (PPHD…ERKY). Residues 1038–1050 (TPVTDSKLIQDSQ) show a composition bias toward polar residues. Positions 1051-1061 (QNDRHQKEKPL) are enriched in basic and acidic residues. Positions 1085-1097 (KPQNLSLPVSTNK) are enriched in polar residues. Residues 1105–1132 (ESSPIESTSPSHSPVSSMESQNGSFSLE) are compositionally biased toward low complexity. The span at 2304-2316 (PNPPRPTTFPTPL) shows a compositional bias: pro residues.

It belongs to the herpesviridae large tegument protein family. As to quaternary structure, interacts with host CUL1 and CUL4A; these interactions inhibit the E3 ligase activity of cullins. Interacts with inner tegument protein. Interacts with capsid vertex specific component CVC2. Interacts with the major capsid protein/MCP.

Its subcellular location is the virion tegument. It localises to the host cytoplasm. It is found in the host nucleus. The catalysed reaction is Thiol-dependent hydrolysis of ester, thioester, amide, peptide and isopeptide bonds formed by the C-terminal Gly of ubiquitin (a 76-residue protein attached to proteins as an intracellular targeting signal).. Functionally, large tegument protein that plays multiple roles in the viral cycle. During viral entry, remains associated with the capsid while most of the tegument is detached and participates in the capsid transport toward the host nucleus. Plays a role in the routing of the capsid at the nuclear pore complex and subsequent uncoating. Within the host nucleus, acts as a deneddylase and promotes the degradation of nuclear CRLs (cullin-RING ubiquitin ligases) and thereby stabilizes nuclear CRL substrates, while cytoplasmic CRLs remain unaffected. These modifications prevent host cell cycle S-phase progression and create a favorable environment allowing efficient viral genome replication. Participates later in the secondary envelopment of capsids. Indeed, plays a linker role for the association of the outer viral tegument to the capsids together with the inner tegument protein. The chain is Large tegument protein deneddylase (64) from Connochaetes taurinus (Blue wildebeest).